The chain runs to 105 residues: MIDIIVKEDKRLITVQTPEGDEVFYTLSFSDGHKILKRSSARLRNNIYAIGVANIRWMLVDMDNMILSEYIHHVDILKDIDRKMREMGYIVISEWQHANKKGTRR.

It belongs to the phi29likevirus gp16.8 family.

This Bacillus phage phi29 (Bacteriophage phi-29) protein is Gene product 16.8 (16.8).